We begin with the raw amino-acid sequence, 529 residues long: Bifunctional purine biosynthesis protein PurH (529 aa).

An MGS-like domain is found at 1–148 (MQQRRPVRRA…KNHKDVAIVV (148 aa)).

It belongs to the PurH family.

It catalyses the reaction (6R)-10-formyltetrahydrofolate + 5-amino-1-(5-phospho-beta-D-ribosyl)imidazole-4-carboxamide = 5-formamido-1-(5-phospho-D-ribosyl)imidazole-4-carboxamide + (6S)-5,6,7,8-tetrahydrofolate. The catalysed reaction is IMP + H2O = 5-formamido-1-(5-phospho-D-ribosyl)imidazole-4-carboxamide. It functions in the pathway purine metabolism; IMP biosynthesis via de novo pathway; 5-formamido-1-(5-phospho-D-ribosyl)imidazole-4-carboxamide from 5-amino-1-(5-phospho-D-ribosyl)imidazole-4-carboxamide (10-formyl THF route): step 1/1. Its pathway is purine metabolism; IMP biosynthesis via de novo pathway; IMP from 5-formamido-1-(5-phospho-D-ribosyl)imidazole-4-carboxamide: step 1/1. This chain is Bifunctional purine biosynthesis protein PurH, found in Salmonella heidelberg (strain SL476).